The primary structure comprises 154 residues: Endoribonuclease YbeY (154 aa).

Positions 117, 121, and 127 each coordinate Zn(2+).

This sequence belongs to the endoribonuclease YbeY family. Requires Zn(2+) as cofactor.

It is found in the cytoplasm. Its function is as follows. Single strand-specific metallo-endoribonuclease involved in late-stage 70S ribosome quality control and in maturation of the 3' terminus of the 16S rRNA. The polypeptide is Endoribonuclease YbeY (Mycoplasma pneumoniae (strain ATCC 29342 / M129 / Subtype 1) (Mycoplasmoides pneumoniae)).